The sequence spans 552 residues: MDIKRTVLWVIFFMSAVMLFDNWQRDHGRPSMFFPSATPTKTVGSAAPGTTTPGTQPADLPATNAAAPGNAPAATQSQLVKFNTDVYSGEIDTRGGTLSKLSLVNKGDGKQPDLVITLFDRTANHTYLARTGLLGGDFPNHNDIYTPLPNQQHDLTGDEKSFQLSFESPVKGGVKVIKTYTFTRGSYVIGVDTKIQNVGTAPVTPSVYMELVRDDQPVETPRFSHTFIGPAVYTDQHHFQKMTFGDIDKNKQDYATSADNGWIAMVQHYFASAWIPQQGVKRDIYVEKIDPALYRVGVKEPVPTIAPGQTVDVSARLFAGPEEERMLEGIAPGLELVKDYGWVTIIAKPLFWLLEKIHSYVGNWGWSIVLLTLLIKAVFFPLSAASYKSMARMKAITPRMQALRERFKGDPQKMNSALMELYKTEKVNPFGGCLPVVIQIPVFISLYWVLLSSVEMRGAPWILWIHDLSQQDPFFILPVLMAVSMFLQTKLNPTPPDPVQAKMMMFMPIAFSVMFFFFPAGLVLYYVVNNVLSIAQQYYITRMMGQTKAKAA.

The helical transmembrane segment at 3 to 23 threads the bilayer; it reads IKRTVLWVIFFMSAVMLFDNW. The segment at 35-59 is disordered; that stretch reads PSATPTKTVGSAAPGTTTPGTQPAD. Positions 42-59 are enriched in low complexity; it reads TVGSAAPGTTTPGTQPAD. Transmembrane regions (helical) follow at residues 364–384, 430–450, and 504–524; these read WGWSIVLLTLLIKAVFFPLSA, FGGCLPVVIQIPVFISLYWVL, and MMFMPIAFSVMFFFFPAGLVL.

It belongs to the OXA1/ALB3/YidC family. Type 1 subfamily. Interacts with the Sec translocase complex via SecD. Specifically interacts with transmembrane segments of nascent integral membrane proteins during membrane integration.

Its subcellular location is the cell inner membrane. Required for the insertion and/or proper folding and/or complex formation of integral membrane proteins into the membrane. Involved in integration of membrane proteins that insert both dependently and independently of the Sec translocase complex, as well as at least some lipoproteins. Aids folding of multispanning membrane proteins. This is Membrane protein insertase YidC from Paraburkholderia phytofirmans (strain DSM 17436 / LMG 22146 / PsJN) (Burkholderia phytofirmans).